A 304-amino-acid polypeptide reads, in one-letter code: Putative S-adenosyl-L-methionine-dependent methyltransferase MAV_1058 (304 aa).

S-adenosyl-L-methionine-binding positions include Asp-128 and 157 to 158 (DL).

Belongs to the UPF0677 family.

In terms of biological role, exhibits S-adenosyl-L-methionine-dependent methyltransferase activity. This is Putative S-adenosyl-L-methionine-dependent methyltransferase MAV_1058 from Mycobacterium avium (strain 104).